Reading from the N-terminus, the 156-residue chain is Transcription factor E (156 aa).

An HTH TFE/IIEalpha-type domain is found at 1-72 (MYGEKAKKVL…LWILNIDQIE (72 aa)).

It belongs to the TFE family. In terms of assembly, monomer. Interaction with RNA polymerase subunits RpoF and RpoE is necessary for Tfe stimulatory transcription activity. Able to interact with Tbp and RNA polymerase in the absence of DNA promoter. Interacts both with the preinitiation and elongation complexes.

Its function is as follows. Transcription factor that plays a role in the activation of archaeal genes transcribed by RNA polymerase. Facilitates transcription initiation by enhancing TATA-box recognition by TATA-box-binding protein (Tbp), and transcription factor B (Tfb) and RNA polymerase recruitment. Not absolutely required for transcription in vitro, but particularly important in cases where Tbp or Tfb function is not optimal. It dynamically alters the nucleic acid-binding properties of RNA polymerases by stabilizing the initiation complex and destabilizing elongation complexes. Seems to translocate with the RNA polymerase following initiation and acts by binding to the non template strand of the transcription bubble in elongation complexes. The polypeptide is Transcription factor E (Staphylothermus marinus (strain ATCC 43588 / DSM 3639 / JCM 9404 / F1)).